A 318-amino-acid chain; its full sequence is Transaldolase (318 aa).

Residue K132 is the Schiff-base intermediate with substrate of the active site.

It belongs to the transaldolase family. Type 1 subfamily. As to quaternary structure, homodimer.

The protein resides in the cytoplasm. The catalysed reaction is D-sedoheptulose 7-phosphate + D-glyceraldehyde 3-phosphate = D-erythrose 4-phosphate + beta-D-fructose 6-phosphate. It participates in carbohydrate degradation; pentose phosphate pathway; D-glyceraldehyde 3-phosphate and beta-D-fructose 6-phosphate from D-ribose 5-phosphate and D-xylulose 5-phosphate (non-oxidative stage): step 2/3. In terms of biological role, transaldolase is important for the balance of metabolites in the pentose-phosphate pathway. This chain is Transaldolase, found in Shewanella woodyi (strain ATCC 51908 / MS32).